A 498-amino-acid polypeptide reads, in one-letter code: ATP synthase subunit beta, chloroplastic (498 aa).

172 to 179 (GGAGVGKT) lines the ATP pocket.

This sequence belongs to the ATPase alpha/beta chains family. In terms of assembly, F-type ATPases have 2 components, CF(1) - the catalytic core - and CF(0) - the membrane proton channel. CF(1) has five subunits: alpha(3), beta(3), gamma(1), delta(1), epsilon(1). CF(0) has four main subunits: a(1), b(1), b'(1) and c(9-12).

The protein resides in the plastid. Its subcellular location is the chloroplast thylakoid membrane. The enzyme catalyses ATP + H2O + 4 H(+)(in) = ADP + phosphate + 5 H(+)(out). Produces ATP from ADP in the presence of a proton gradient across the membrane. The catalytic sites are hosted primarily by the beta subunits. The protein is ATP synthase subunit beta, chloroplastic of Hyophorbe lagenicaulis (Bottle palm).